Reading from the N-terminus, the 168-residue chain is NADH dehydrogenase [ubiquinone] 1 alpha subcomplex assembly factor 2 (168 aa).

Residues 108–118 (KEKLLQEESNK) are compositionally biased toward basic and acidic residues. The disordered stretch occupies residues 108-168 (KEKLLQEESN…MPHGDKGHSQ (61 aa)). Residue Ser-133 is modified to Phosphoserine. Polar residues predominate over residues 144-155 (ESPTSTGKTFQP).

The protein belongs to the complex I NDUFA12 subunit family. Interacts with ARMC9.

Its subcellular location is the mitochondrion. Functionally, acts as a molecular chaperone for mitochondrial complex I assembly. Complex I functions in the transfer of electrons from NADH to the respiratory chain. The immediate electron acceptor for the enzyme is believed to be ubiquinone. Is involved in the initial steps of cilia formation, including removal of CP110 from the mother centrioles, docking of membrane vesicles to the mother centrioles, and establishment of the transition zone. The protein is NADH dehydrogenase [ubiquinone] 1 alpha subcomplex assembly factor 2 (NDUFAF2) of Bos taurus (Bovine).